We begin with the raw amino-acid sequence, 572 residues long: Urease subunit alpha (572 aa).

Residues histidine 139, histidine 141, and lysine 222 each coordinate Ni(2+). Lysine 222 is subject to N6-carboxylysine. Substrate is bound at residue histidine 224. The Ni(2+) site is built by histidine 251 and histidine 277. Catalysis depends on histidine 325, which acts as the Proton donor. Aspartate 365 serves as a coordination point for Ni(2+).

Belongs to the metallo-dependent hydrolases superfamily. Urease alpha subunit family. Heterotrimer of UreA (gamma), UreB (beta) and UreC (alpha) subunits. Three heterotrimers associate to form the active enzyme. The cofactor is Ni cation. Carboxylation allows a single lysine to coordinate two nickel ions.

The protein localises to the cytoplasm. It carries out the reaction urea + 2 H2O + H(+) = hydrogencarbonate + 2 NH4(+). Its pathway is nitrogen metabolism; urea degradation; CO(2) and NH(3) from urea (urease route): step 1/1. The sequence is that of Urease subunit alpha from Acetivibrio thermocellus (strain ATCC 27405 / DSM 1237 / JCM 9322 / NBRC 103400 / NCIMB 10682 / NRRL B-4536 / VPI 7372) (Clostridium thermocellum).